The following is a 293-amino-acid chain: Glycerophosphodiester phosphodiesterase (293 aa).

An N-terminal signal peptide occupies residues 1 to 26; that stretch reads MRKNRILALFVLSLGLLSFMVTPVSA. Residues 38-290 form the GP-PDE domain; that stretch reads ILTVAHRGAS…NYPDLFHKVK (253 aa). The active-site Proton acceptor is histidine 43. Residues histidine 43, arginine 44, and glutamate 70 each coordinate sn-glycerol 3-phosphate. Residues glutamate 70 and aspartate 72 each coordinate Ca(2+). The sn-glycerol 3-phosphate site is built by histidine 85, glutamate 152, and glutamine 188. Residue histidine 85 is the Proton donor of the active site. Glutamate 152 contributes to the Ca(2+) binding site.

It belongs to the glycerophosphoryl diester phosphodiesterase family. Ca(2+) is required as a cofactor.

Its subcellular location is the secreted. The enzyme catalyses a sn-glycero-3-phosphodiester + H2O = an alcohol + sn-glycerol 3-phosphate + H(+). Its function is as follows. Glycerophosphodiester phosphodiesterase hydrolyzes glycerophosphodiesters into glycerol-3-phosphate (G3P) and the corresponding alcohol. Involved in wall teichoic acid (WTA) metabolism during phosphate starvation. Catalyzes the degradation of WTA, enabling the utilization of WTA as a phosphate reserve under limiting conditions. Is highly selective for the poly(gylcerol phosphate) WTA backbone and catalyzes exolytic cleavage of individual monomer units. In vitro is active toward the WTA oligomer mimics glycerophosphoglycerol (GPG) and bis-glycerophosphoglycerol (bGPG). The polypeptide is Glycerophosphodiester phosphodiesterase (Bacillus subtilis (strain 168)).